A 66-amino-acid polypeptide reads, in one-letter code: Large ribosomal subunit protein bL33 (66 aa).

Belongs to the bacterial ribosomal protein bL33 family.

The sequence is that of Large ribosomal subunit protein bL33 from Prochlorococcus marinus (strain MIT 9303).